The sequence spans 452 residues: Phosphoglucosamine mutase (452 aa).

The active-site Phosphoserine intermediate is Ser108. Positions 108, 247, 249, and 251 each coordinate Mg(2+). Ser108 carries the post-translational modification Phosphoserine.

Belongs to the phosphohexose mutase family. Mg(2+) serves as cofactor. Post-translationally, activated by phosphorylation.

It catalyses the reaction alpha-D-glucosamine 1-phosphate = D-glucosamine 6-phosphate. Its function is as follows. Catalyzes the conversion of glucosamine-6-phosphate to glucosamine-1-phosphate. This Burkholderia pseudomallei (strain K96243) protein is Phosphoglucosamine mutase.